A 289-amino-acid chain; its full sequence is MPKFIAVKLIPKGPFRDIPRADTLFGAIGNAISAIHGQSAVEELVDAFVGGARISSAFPYSGDTYYLPKPLSVEPALEGILTGLDEEERYTTAKRLRKAKYLDLKNFELALRLRPFTIPEEIPYARVDVPRVVLDRVTQDSSIYFWEEIRFREKSGVYFLYSGPREVFDGYIAPAMRFLGDTGIGGKSTWGAGLFEVEFHEMKIDAPGSEYSVTLSNALPTKTPVLWRLLRKGGWSFGRRKPRMTFIAEGSIVKNDPGGMERLELGLSHEVYVYGLTFPLGVELPEGLE.

Belongs to the CRISPR-associated Csm4 family. In terms of assembly, probably part of the Csm effector complex, that includes Cas10, Csm2, Csm3, Csm4, Csm5 and mature crRNA. Interacts with Cas10 (csm1).

Functionally, CRISPR (clustered regularly interspaced short palindromic repeat) is an adaptive immune system that provides protection against mobile genetic elements (viruses, transposable elements and conjugative plasmids). CRISPR clusters contain spacers, sequences complementary to antecedent mobile elements, and target invading nucleic acids. CRISPR clusters are transcribed and processed into CRISPR RNA (crRNA). The type III-A Csm effector complex binds crRNA and acts as a crRNA-guided RNase, DNase and cyclic oligoadenylate synthase; binding of target RNA cognate to the crRNA is required for all activities. Its function is as follows. The subunit probably binds to the 5' handle of the crRNA, helping in discrimination between self- and non-self. This chain is CRISPR system Cms protein Csm4, found in Thermococcus onnurineus (strain NA1).